We begin with the raw amino-acid sequence, 217 residues long: Variable small protein 22 (217 aa).

A signal peptide spans Met1–Ser18. A lipid anchor (N-palmitoyl cysteine) is attached at Cys19. A lipid anchor (S-diacylglycerol cysteine) is attached at Cys19. A disordered region spans residues Leu151–Lys174. Over residues Asp155–Lys174 the composition is skewed to basic and acidic residues.

This sequence belongs to the variable small protein (Vsp) family.

It is found in the cell outer membrane. In terms of biological role, the Vlp and Vsp proteins are antigenically distinct proteins, only one vlp or vsp gene is transcriptionally active at any one time. Switching between these genes is a mechanism of host immune response evasion. This is Variable small protein 22 from Borrelia hermsii.